A 146-amino-acid chain; its full sequence is Small ribosomal subunit protein uS13A (146 aa).

Ser2 carries the post-translational modification N-acetylserine. Lys36 participates in a covalent cross-link: Glycyl lysine isopeptide (Lys-Gly) (interchain with G-Cter in ubiquitin). Lys48 carries the N6-methyllysine; by RKM1 modification. Residues Lys49, Lys80, and Lys96 each participate in a glycyl lysine isopeptide (Lys-Gly) (interchain with G-Cter in ubiquitin) cross-link.

The protein belongs to the universal ribosomal protein uS13 family. Component of the small ribosomal subunit (SSU). Mature yeast ribosomes consist of a small (40S) and a large (60S) subunit. The 40S small subunit contains 1 molecule of ribosomal RNA (18S rRNA) and 33 different proteins (encoded by 57 genes). The large 60S subunit contains 3 rRNA molecules (25S, 5.8S and 5S rRNA) and 46 different proteins (encoded by 81 genes). N-terminally acetylated by acetyltransferase NatA.

It is found in the cytoplasm. Its function is as follows. Component of the ribosome, a large ribonucleoprotein complex responsible for the synthesis of proteins in the cell. The small ribosomal subunit (SSU) binds messenger RNAs (mRNAs) and translates the encoded message by selecting cognate aminoacyl-transfer RNA (tRNA) molecules. The large subunit (LSU) contains the ribosomal catalytic site termed the peptidyl transferase center (PTC), which catalyzes the formation of peptide bonds, thereby polymerizing the amino acids delivered by tRNAs into a polypeptide chain. The nascent polypeptides leave the ribosome through a tunnel in the LSU and interact with protein factors that function in enzymatic processing, targeting, and the membrane insertion of nascent chains at the exit of the ribosomal tunnel. The chain is Small ribosomal subunit protein uS13A from Saccharomyces cerevisiae (strain ATCC 204508 / S288c) (Baker's yeast).